A 49-amino-acid polypeptide reads, in one-letter code: Large ribosomal subunit protein bL33 (49 aa).

It belongs to the bacterial ribosomal protein bL33 family.

The sequence is that of Large ribosomal subunit protein bL33 from Caldanaerobacter subterraneus subsp. tengcongensis (strain DSM 15242 / JCM 11007 / NBRC 100824 / MB4) (Thermoanaerobacter tengcongensis).